A 501-amino-acid chain; its full sequence is Glycerol kinase (501 aa).

Thr17 contacts ADP. The ATP site is built by Thr17, Thr18, and Ser19. Thr17 lines the sn-glycerol 3-phosphate pocket. ADP is bound at residue Arg21. Residues Arg87, Glu88, Tyr139, and Asp243 each coordinate sn-glycerol 3-phosphate. The glycerol site is built by Arg87, Glu88, Tyr139, Asp243, and Gln244. Positions 265 and 308 each coordinate ADP. The ATP site is built by Thr265, Gly308, Gln312, and Gly409. Gly409 and Asn413 together coordinate ADP.

It belongs to the FGGY kinase family.

It carries out the reaction glycerol + ATP = sn-glycerol 3-phosphate + ADP + H(+). Its pathway is polyol metabolism; glycerol degradation via glycerol kinase pathway; sn-glycerol 3-phosphate from glycerol: step 1/1. Its activity is regulated as follows. Inhibited by fructose 1,6-bisphosphate (FBP). In terms of biological role, key enzyme in the regulation of glycerol uptake and metabolism. Catalyzes the phosphorylation of glycerol to yield sn-glycerol 3-phosphate. This chain is Glycerol kinase, found in Pseudomonas fluorescens (strain SBW25).